The primary structure comprises 116 residues: Probable transcriptional regulator WhiB6 (116 aa).

Residues Cys12, Cys53, Cys56, and Cys62 each contribute to the [4Fe-4S] cluster site. The region spanning 33-86 is the 4Fe-4S Wbl-type domain; the sequence is VCTQDPDRWTTTPDDEAKTLCRACPRRWLCARDAVESAGAEGLWAGVVIPESGR.

This sequence belongs to the WhiB family. [4Fe-4S] cluster serves as cofactor. In terms of processing, the Fe-S cluster can be nitrosylated by nitric oxide (NO). Post-translationally, upon Fe-S cluster removal intramolecular disulfide bonds are formed.

The protein localises to the cytoplasm. Functionally, acts as a transcriptional regulator. Probably redox-responsive. The apo- but not holo-form probably binds DNA. In Mycobacterium tuberculosis (strain CDC 1551 / Oshkosh), this protein is Probable transcriptional regulator WhiB6 (whiB6).